An 80-amino-acid polypeptide reads, in one-letter code: Defensin-like protein CAL1 (80 aa).

A signal peptide spans 1–31 (MAPSRRMVASAFLLLAILVATEMGTTKVAEA). 4 cysteine pairs are disulfide-bonded: Cys34-Cys80, Cys45-Cys65, Cys51-Cys74, and Cys55-Cys76.

It belongs to the DEFL family. As to expression, expressed preferentially in root exodermis and xylem parenchyma cells in vasculature of root and flag leaf sheath.

Its subcellular location is the secreted. It is found in the extracellular space. In terms of biological role, plant defensin-like protein involved in accumulation of cadmium (Cd) in rice leaves. Mediates Cd efflux from cytosol into extracellular spaces via chelation. This drives Cd secretion from xylem parenchyma cells into the xylem vessels, hence lowering Cd levels in cytosol meanwhile promoting Cd translocation from roots to shoots. The protein is Defensin-like protein CAL1 of Oryza sativa subsp. japonica (Rice).